The chain runs to 529 residues: MAELTIRPEEIRDALENFVQSYKPDAASREEVGTVTLAGDGIAKVEGLPSAMANELLKFEDGTLGLALNLEEREIGCVVLGEFSGIEEGQPVSRTGEVLSVAVAEGYLGRVVDPLGNPIDGLGEIETSGRRALELQAPTVMQRKSVHEPMETGYKAVDAMTPIGRGQRQLIIGDRQTGKTALAVDTIINQRDNWRTGDPNKQVRCIYVAIGQKGSTIASVRGALEENGALEYTTIVAAPASDPAGFKYLAPYTGSAIGQQWMYEGKHVLIIFDDLSKQADAYRAVSLLLRRPPGREAYPGDVFYLHSRLLERCAKLSDAEGAGSMTGLPIVETKANDVSAFIPTNVISITDGQCFLESDLFNAGQRPALNVGISVSRVGGSAQHKAMKQVSGRLRVDLAQFRELEAFAAFGSDLDAASKSQLERGQRMVELLKQNQYQPMSTEDQVVSVWAGTTGKMDEVPVADIRRFEKELLEYLHRQEQGLMTSIREGGKMSDDTLQAVAEAIAAFKKQFETSDGKLLGEDAPSAAK.

173–180 (GDRQTGKT) serves as a coordination point for ATP.

Belongs to the ATPase alpha/beta chains family. As to quaternary structure, F-type ATPases have 2 components, CF(1) - the catalytic core - and CF(0) - the membrane proton channel. CF(1) has five subunits: alpha(3), beta(3), gamma(1), delta(1), epsilon(1). CF(0) has three main subunits: a(1), b(2) and c(9-12). The alpha and beta chains form an alternating ring which encloses part of the gamma chain. CF(1) is attached to CF(0) by a central stalk formed by the gamma and epsilon chains, while a peripheral stalk is formed by the delta and b chains.

It localises to the cell membrane. The enzyme catalyses ATP + H2O + 4 H(+)(in) = ADP + phosphate + 5 H(+)(out). Produces ATP from ADP in the presence of a proton gradient across the membrane. The alpha chain is a regulatory subunit. The protein is ATP synthase subunit alpha of Streptomyces lividans.